A 691-amino-acid chain; its full sequence is Elongation factor G (691 aa).

The tr-type G domain maps to 8–283 (EDYRNFGIMA…AVVDYLPTPI (276 aa)). GTP is bound by residues 17–24 (AHIDAGKT), 81–85 (DTPGH), and 135–138 (NKMD).

The protein belongs to the TRAFAC class translation factor GTPase superfamily. Classic translation factor GTPase family. EF-G/EF-2 subfamily.

Its subcellular location is the cytoplasm. Catalyzes the GTP-dependent ribosomal translocation step during translation elongation. During this step, the ribosome changes from the pre-translocational (PRE) to the post-translocational (POST) state as the newly formed A-site-bound peptidyl-tRNA and P-site-bound deacylated tRNA move to the P and E sites, respectively. Catalyzes the coordinated movement of the two tRNA molecules, the mRNA and conformational changes in the ribosome. This is Elongation factor G from Beijerinckia indica subsp. indica (strain ATCC 9039 / DSM 1715 / NCIMB 8712).